Consider the following 208-residue polypeptide: 2-phospho-L-lactate guanylyltransferase (208 aa).

The protein belongs to the CofC family. Homodimer.

The catalysed reaction is (2S)-2-phospholactate + GTP + H(+) = (2S)-lactyl-2-diphospho-5'-guanosine + diphosphate. Its pathway is cofactor biosynthesis; coenzyme F420 biosynthesis. Its function is as follows. Guanylyltransferase that catalyzes the activation of (2S)-2-phospholactate (2-PL) as (2S)-lactyl-2-diphospho-5'-guanosine, via the condensation of 2-PL with GTP. It is involved in the biosynthesis of coenzyme F420, a hydride carrier cofactor. The polypeptide is 2-phospho-L-lactate guanylyltransferase (Methanosarcina barkeri (strain Fusaro / DSM 804)).